The chain runs to 86 residues: Large ribosomal subunit protein bL27 (86 aa).

This sequence belongs to the bacterial ribosomal protein bL27 family.

The chain is Large ribosomal subunit protein bL27 from Flavobacterium johnsoniae (strain ATCC 17061 / DSM 2064 / JCM 8514 / BCRC 14874 / CCUG 350202 / NBRC 14942 / NCIMB 11054 / UW101) (Cytophaga johnsonae).